Reading from the N-terminus, the 547-residue chain is GMP synthase [glutamine-hydrolyzing] (547 aa).

In terms of domain architecture, Glutamine amidotransferase type-1 spans 12–210 (KVLILDFGSQ…VLEIAGAKPD (199 aa)). The active-site Nucleophile is C89. Residues H184 and E186 contribute to the active site. One can recognise a GMPS ATP-PPase domain in the interval 211–403 (WIMRDHIEEA…LGLPPEMVYR (193 aa)). 238-244 (SGGVDSS) is a binding site for ATP.

In terms of assembly, homodimer.

The catalysed reaction is XMP + L-glutamine + ATP + H2O = GMP + L-glutamate + AMP + diphosphate + 2 H(+). The protein operates within purine metabolism; GMP biosynthesis; GMP from XMP (L-Gln route): step 1/1. Functionally, catalyzes the synthesis of GMP from XMP. The chain is GMP synthase [glutamine-hydrolyzing] from Ralstonia nicotianae (strain ATCC BAA-1114 / GMI1000) (Ralstonia solanacearum).